A 529-amino-acid chain; its full sequence is Tyrosinase (529 aa).

Positions Met1–Gly18 are cleaved as a signal peptide. Residues Gln19–Pro476 are Lumenal, melanosome-facing. Residues Asn86, Asn111, and Asn161 are each glycosylated (N-linked (GlcNAc...) asparagine). Cu cation-binding residues include His180, His202, and His211. Residues Asn230 and Asn290 are each glycosylated (N-linked (GlcNAc...) asparagine). Residues Ser293–Pro313 are disordered. Asn337 and Asn356 each carry an N-linked (GlcNAc...) asparagine glycan. Cu cation contacts are provided by His363 and His367. Asn371 carries N-linked (GlcNAc...) asparagine glycosylation. Position 390 (His390) interacts with Cu cation. The helical transmembrane segment at Trp477 to Leu497 threads the bilayer. The Cytoplasmic portion of the chain corresponds to Ala498–Phe529.

Belongs to the tyrosinase family. Cu(2+) is required as a cofactor.

Its subcellular location is the melanosome membrane. The protein localises to the melanosome. It carries out the reaction 2 L-dopa + O2 = 2 L-dopaquinone + 2 H2O. The enzyme catalyses L-tyrosine + O2 = L-dopaquinone + H2O. Its function is as follows. This is a copper-containing oxidase that functions in the formation of pigments such as melanins and other polyphenolic compounds. Catalyzes the initial and rate limiting step in the cascade of reactions leading to melanin production from tyrosine. In addition to hydroxylating tyrosine to DOPA (3,4-dihydroxyphenylalanine), also catalyzes the oxidation of DOPA to DOPA-quinone, and possibly the oxidation of DHI (5,6-dihydroxyindole) to indole-5,6 quinone. The polypeptide is Tyrosinase (TYR) (Gallus gallus (Chicken)).